Reading from the N-terminus, the 201-residue chain is Peptide deformylase (201 aa).

Positions 121 and 163 each coordinate Fe cation. The active site involves glutamate 164. Position 167 (histidine 167) interacts with Fe cation.

It belongs to the polypeptide deformylase family. The cofactor is Fe(2+).

It carries out the reaction N-terminal N-formyl-L-methionyl-[peptide] + H2O = N-terminal L-methionyl-[peptide] + formate. Its function is as follows. Removes the formyl group from the N-terminal Met of newly synthesized proteins. Requires at least a dipeptide for an efficient rate of reaction. N-terminal L-methionine is a prerequisite for activity but the enzyme has broad specificity at other positions. The protein is Peptide deformylase of Parasynechococcus marenigrum (strain WH8102).